The sequence spans 179 residues: Probable chorismate pyruvate-lyase (179 aa).

3 residues coordinate substrate: arginine 82, leucine 120, and glutamate 165.

This sequence belongs to the UbiC family.

It is found in the cytoplasm. The enzyme catalyses chorismate = 4-hydroxybenzoate + pyruvate. The protein operates within cofactor biosynthesis; ubiquinone biosynthesis. Its function is as follows. Removes the pyruvyl group from chorismate, with concomitant aromatization of the ring, to provide 4-hydroxybenzoate (4HB) for the ubiquinone pathway. The chain is Probable chorismate pyruvate-lyase from Vibrio parahaemolyticus serotype O3:K6 (strain RIMD 2210633).